The primary structure comprises 510 residues: NAD(P)H-quinone oxidoreductase subunit 2, chloroplastic (510 aa).

The next 13 membrane-spanning stretches (helical) occupy residues 24-44, 59-79, 99-119, 124-144, 149-169, 183-203, 229-249, 295-315, 323-343, 354-374, 395-415, 418-438, and 484-504; these read LLLF…GLIL, WFYF…LFRW, IFQF…VEYI, MAIT…MFLC, LITI…LSGY, YLLM…WLYG, ISIA…PAPF, WHLL…LIAI, MLAY…IVGD, YMLF…SFGL, ALSL…AGFF, LYLF…MGLL, and MTVC…ILAI.

The protein belongs to the complex I subunit 2 family. NDH is composed of at least 16 different subunits, 5 of which are encoded in the nucleus.

The protein resides in the plastid. It localises to the chloroplast thylakoid membrane. It catalyses the reaction a plastoquinone + NADH + (n+1) H(+)(in) = a plastoquinol + NAD(+) + n H(+)(out). The catalysed reaction is a plastoquinone + NADPH + (n+1) H(+)(in) = a plastoquinol + NADP(+) + n H(+)(out). Functionally, NDH shuttles electrons from NAD(P)H:plastoquinone, via FMN and iron-sulfur (Fe-S) centers, to quinones in the photosynthetic chain and possibly in a chloroplast respiratory chain. The immediate electron acceptor for the enzyme in this species is believed to be plastoquinone. Couples the redox reaction to proton translocation, and thus conserves the redox energy in a proton gradient. In Sisyrinchium montanum (Strict blue-eyed grass), this protein is NAD(P)H-quinone oxidoreductase subunit 2, chloroplastic.